The sequence spans 401 residues: Mannan endo-1,4-beta-mannosidase 3 (401 aa).

The N-terminal stretch at 1–24 (MSYTHRRSCISGLFLLLLALSCEA) is a signal peptide. Tryptophan 84 and asparagine 198 together coordinate substrate. Glutamate 199 (proton donor) is an active-site residue. Residue tyrosine 277 participates in substrate binding. The Nucleophile role is filled by glutamate 317. Tryptophan 356 is a binding site for substrate.

Belongs to the glycosyl hydrolase 5 (cellulase A) family.

Its subcellular location is the secreted. The catalysed reaction is Random hydrolysis of (1-&gt;4)-beta-D-mannosidic linkages in mannans, galactomannans and glucomannans.. The protein is Mannan endo-1,4-beta-mannosidase 3 (MAN3) of Solanum lycopersicum (Tomato).